The sequence spans 126 residues: Alpha-lactalbumin (126 aa).

Positions 1-126 (RIFQICELSR…CNSDLDQWKC (126 aa)) constitute a C-type lysozyme domain. Disulfide bonds link Cys-6/Cys-126, Cys-30/Cys-117, Cys-63/Cys-82, and Cys-78/Cys-96. Asn-47 carries N-linked (GlcNAc...) asparagine glycosylation. Lys-84, Asp-87, Asp-89, Asp-92, and Asp-93 together coordinate Ca(2+).

Belongs to the glycosyl hydrolase 22 family. Lactose synthase (LS) is a heterodimer of a catalytic component, beta1,4-galactosyltransferase (beta4Gal-T1) and a regulatory component, alpha-lactalbumin (LA). In terms of tissue distribution, mammary gland specific. Secreted in milk.

The protein localises to the secreted. Functionally, regulatory subunit of lactose synthase, changes the substrate specificity of galactosyltransferase in the mammary gland making glucose a good acceptor substrate for this enzyme. This enables LS to synthesize lactose, the major carbohydrate component of milk. In other tissues, galactosyltransferase transfers galactose onto the N-acetylglucosamine of the oligosaccharide chains in glycoproteins. This is Alpha-lactalbumin (LALBA) from Ornithorhynchus anatinus (Duckbill platypus).